Consider the following 489-residue polypeptide: UDP-N-acetylmuramoyl-L-alanyl-D-glutamate--2,6-diaminopimelate ligase (489 aa).

S34 provides a ligand contact to UDP-N-acetyl-alpha-D-muramoyl-L-alanyl-D-glutamate. Residue G110–S116 participates in ATP binding. Residues T152–T153, S179, Q185, and R187 each bind UDP-N-acetyl-alpha-D-muramoyl-L-alanyl-D-glutamate. K219 is modified (N6-carboxylysine). Meso-2,6-diaminopimelate contacts are provided by residues R383, D407–R410, G455, and E459. The Meso-diaminopimelate recognition motif motif lies at D407 to R410.

This sequence belongs to the MurCDEF family. MurE subfamily. It depends on Mg(2+) as a cofactor. Carboxylation is probably crucial for Mg(2+) binding and, consequently, for the gamma-phosphate positioning of ATP.

It localises to the cytoplasm. The enzyme catalyses UDP-N-acetyl-alpha-D-muramoyl-L-alanyl-D-glutamate + meso-2,6-diaminopimelate + ATP = UDP-N-acetyl-alpha-D-muramoyl-L-alanyl-gamma-D-glutamyl-meso-2,6-diaminopimelate + ADP + phosphate + H(+). The protein operates within cell wall biogenesis; peptidoglycan biosynthesis. Catalyzes the addition of meso-diaminopimelic acid to the nucleotide precursor UDP-N-acetylmuramoyl-L-alanyl-D-glutamate (UMAG) in the biosynthesis of bacterial cell-wall peptidoglycan. In Agrobacterium fabrum (strain C58 / ATCC 33970) (Agrobacterium tumefaciens (strain C58)), this protein is UDP-N-acetylmuramoyl-L-alanyl-D-glutamate--2,6-diaminopimelate ligase.